Consider the following 767-residue polypeptide: 5-methyltetrahydropteroyltriglutamate--homocysteine methyltransferase (767 aa).

Residues 16–19 (RELK) and lysine 122 contribute to the 5-methyltetrahydropteroyltri-L-glutamate site. Residues 443-445 (IGS) and glutamate 496 contribute to the L-homocysteine site. L-methionine contacts are provided by residues 443–445 (IGS) and glutamate 496. Residues 527-528 (RC) and tryptophan 573 each bind 5-methyltetrahydropteroyltri-L-glutamate. Aspartate 611 serves as a coordination point for L-homocysteine. Aspartate 611 contacts L-methionine. Glutamate 617 is a binding site for 5-methyltetrahydropteroyltri-L-glutamate. Histidine 653, cysteine 655, and glutamate 677 together coordinate Zn(2+). Histidine 706 functions as the Proton donor in the catalytic mechanism. Cysteine 738 provides a ligand contact to Zn(2+).

It belongs to the vitamin-B12 independent methionine synthase family. The cofactor is Zn(2+).

The catalysed reaction is 5-methyltetrahydropteroyltri-L-glutamate + L-homocysteine = tetrahydropteroyltri-L-glutamate + L-methionine. It participates in amino-acid biosynthesis; L-methionine biosynthesis via de novo pathway; L-methionine from L-homocysteine (MetE route): step 1/1. Catalyzes the transfer of a methyl group from 5-methyltetrahydrofolate to homocysteine resulting in methionine formation. The sequence is that of 5-methyltetrahydropteroyltriglutamate--homocysteine methyltransferase from Ectopseudomonas mendocina (strain ymp) (Pseudomonas mendocina).